The chain runs to 226 residues: PKHD-type hydroxylase PSPA7_5129 (226 aa).

In terms of domain architecture, Fe2OG dioxygenase spans 78-178 (KVFPPLFNCY…RYASFFWTQS (101 aa)). Residues His96, Asp98, and His159 each contribute to the Fe cation site. Arg169 provides a ligand contact to 2-oxoglutarate.

Fe(2+) serves as cofactor. L-ascorbate is required as a cofactor.

This Pseudomonas paraeruginosa (strain DSM 24068 / PA7) (Pseudomonas aeruginosa (strain PA7)) protein is PKHD-type hydroxylase PSPA7_5129.